The primary structure comprises 452 residues: Mitochondrial distribution and morphology protein 10 (452 aa).

The interval 105–130 (PLAPESWDSDGPGHEGSDGQEDETTP) is disordered.

Belongs to the MDM10 family. In terms of assembly, component of the ER-mitochondria encounter structure (ERMES) or MDM complex, composed of MMM1, MDM10, MDM12 and MDM34. Associates with the mitochondrial outer membrane sorting assembly machinery SAM(core) complex.

The protein resides in the mitochondrion outer membrane. Functionally, component of the ERMES/MDM complex, which serves as a molecular tether to connect the endoplasmic reticulum and mitochondria. Components of this complex are involved in the control of mitochondrial shape and protein biogenesis and may function in phospholipid exchange. MDM10 is involved in the late assembly steps of the general translocase of the mitochondrial outer membrane (TOM complex). Functions in the TOM40-specific route of the assembly of outer membrane beta-barrel proteins, including the association of TOM40 with the receptor TOM22 and small TOM proteins. Can associate with the SAM(core) complex as well as the MDM12-MMM1 complex, both involved in late steps of the major beta-barrel assembly pathway, that is responsible for biogenesis of all outer membrane beta-barrel proteins. May act as a switch that shuttles between both complexes and channels precursor proteins into the TOM40-specific pathway. Plays a role in mitochondrial morphology and in the inheritance of mitochondria. The sequence is that of Mitochondrial distribution and morphology protein 10 from Uncinocarpus reesii (strain UAMH 1704).